The primary structure comprises 103 residues: Large ribosomal subunit protein bL21 (103 aa).

It belongs to the bacterial ribosomal protein bL21 family. Part of the 50S ribosomal subunit. Contacts protein L20.

Functionally, this protein binds to 23S rRNA in the presence of protein L20. The polypeptide is Large ribosomal subunit protein bL21 (Cupriavidus pinatubonensis (strain JMP 134 / LMG 1197) (Cupriavidus necator (strain JMP 134))).